The chain runs to 191 residues: Protein GrpE (191 aa).

The segment covering 1-21 (MSDKKKNAEEFEETFSDKTSE) has biased composition (basic and acidic residues). The tract at residues 1-39 (MSDKKKNAEEFEETFSDKTSEDESTVENETVEENENEDV) is disordered. Residues 22 to 38 (DESTVENETVEENENED) show a composition bias toward acidic residues.

The protein belongs to the GrpE family. Homodimer.

The protein resides in the cytoplasm. Participates actively in the response to hyperosmotic and heat shock by preventing the aggregation of stress-denatured proteins, in association with DnaK and GrpE. It is the nucleotide exchange factor for DnaK and may function as a thermosensor. Unfolded proteins bind initially to DnaJ; upon interaction with the DnaJ-bound protein, DnaK hydrolyzes its bound ATP, resulting in the formation of a stable complex. GrpE releases ADP from DnaK; ATP binding to DnaK triggers the release of the substrate protein, thus completing the reaction cycle. Several rounds of ATP-dependent interactions between DnaJ, DnaK and GrpE are required for fully efficient folding. The sequence is that of Protein GrpE from Tetragenococcus halophilus (Pediococcus halophilus).